The sequence spans 510 residues: GMP synthase [glutamine-hydrolyzing] (510 aa).

Residues 5–195 (LVIVLDFGGQ…LFNIADLSAD (191 aa)) enclose the Glutamine amidotransferase type-1 domain. Catalysis depends on Cys82, which acts as the Nucleophile. Catalysis depends on residues His169 and Glu171. In terms of domain architecture, GMPS ATP-PPase spans 196–385 (WTMGSYIEET…LGLHREIVER (190 aa)). 223-229 (SGGIDST) lines the ATP pocket.

In terms of assembly, homodimer.

The enzyme catalyses XMP + L-glutamine + ATP + H2O = GMP + L-glutamate + AMP + diphosphate + 2 H(+). It functions in the pathway purine metabolism; GMP biosynthesis; GMP from XMP (L-Gln route): step 1/1. Catalyzes the synthesis of GMP from XMP. The protein is GMP synthase [glutamine-hydrolyzing] of Natranaerobius thermophilus (strain ATCC BAA-1301 / DSM 18059 / JW/NM-WN-LF).